Consider the following 145-residue polypeptide: Probable flagellum biosynthesis repressor protein FlbT (145 aa).

The protein belongs to the FlbT family.

In terms of biological role, has a post-transcriptional repressor function in flagellum biogenesis. Associates with the 5'-UTR of fljK mRNA and promotes its degradation. This Chelativorans sp. (strain BNC1) protein is Probable flagellum biosynthesis repressor protein FlbT.